A 383-amino-acid chain; its full sequence is Trihelix transcription factor ASIL1 (383 aa).

Disordered stretches follow at residues 1–32, 61–94, 189–295, and 346–383; these read MEDDDEIQSIPSPGDSSLSPQAPPSPPILPTN, HTPSVTGGGGSGNRNGRGGGGGSGGGGGGRDDCW, IASS…SGVG, and EITQNNQEEEERSRQRGERRIVDDDDDRNGKNNGNVSS. Positions 66-88 are enriched in gly residues; it reads TGGGGSGNRNGRGGGGGSGGGGG. Positions 94-153 constitute a Myb-like domain; that stretch reads WSEEATKVLIEAWGDRFSEPGKGTLKQQHWKEVAEIVNKSRQCKYPKTDIQCKNRIDTVK. Residues 206–225 show a composition bias toward polar residues; that stretch reads NSRSSMFKRQTKGNQIVQQQ. Residues 226 to 235 show a composition bias toward basic and acidic residues; sequence QEKRGSDSMR. Residues 228-241 carry the Bipartite nuclear localization signal motif; the sequence is KRGSDSMRWHFRKR. Residues 246–262 are compositionally biased toward acidic residues; sequence TESESDPEPEASPEESA. Low complexity predominate over residues 263–274; it reads ESLPPLQPIQPL. A coiled-coil region spans residues 304–365; it reads FTEAYEKAET…ERSRQRGERR (62 aa). Basic and acidic residues predominate over residues 356-367; sequence ERSRQRGERRIV.

The protein localises to the nucleus. Its function is as follows. Transcription repressor that binds specific DNA sequence such as the GT-box-like motif 5'-CGTGATT-3' in the AT2S3 promoter. Negative regulator of seed maturation genes during seed germination and seedling development. May target GT-box-containing embryonic genes by competing with the binding of transcriptional activators to this promoter region. Contributes to the maintenance and control of seed filling and may repress the maturation program during early embryogenesis. In Arabidopsis thaliana (Mouse-ear cress), this protein is Trihelix transcription factor ASIL1.